We begin with the raw amino-acid sequence, 395 residues long: MEGTQEALSGKMRLLFTPAARTSLLMLRLNEAALRALQECQQQQVRPVIAFQGHRGYLRFPGPGWSCLFSFIVSQCGQEGTNGGLDLVYQRLGRSGPNCLHCLGSLRERLTIWAAMDTIPAPLLAQEHLTEGTRESESWQDTGDEPEGHPQLAPDEVSDPLASHHEQSLPGSSSEPMAQWEMRNHTYLPSREPDQSLLSPASQKRLDKKRSAPITTEEPEEKRLRALPLASSPLQGLANQDSQEGEDWGQDEDEEGDEDGDSRLEQSLSAPSASESPSPEEVPDYLLQYRAIHSTEQQQAYEQDFETDYAEYRILHARVGAASQRFTELGAEIKRLQRGTPEHKVLEDKIVQEYKKFRKRYPSYREEKHRCEYLHQKLSHIKGLILEFEEKNRGS.

Disordered regions lie at residues 129-177 and 189-281; these read LTEG…SEPM and PSRE…SPEE. A Phosphoserine modification is found at serine 242. The span at 243 to 260 shows a compositional bias: acidic residues; that stretch reads QEGEDWGQDEDEEGDEDG. Low complexity predominate over residues 269-279; sequence SAPSASESPSP. The OCEL domain maps to 283 to 393; the sequence is PDYLLQYRAI…LILEFEEKNR (111 aa).

Belongs to the ELL/occludin family. As to quaternary structure, component of the little elongation complex (LEC), at least composed of ELL (ELL, ELL2 or ELL3), ZC3H8, ICE1 and ICE2. Component of the super elongation complex (SEC), at least composed of EAF1, EAF2, CDK9, MLLT3/AF9, AFF (AFF1 or AFF4), the P-TEFb complex and ELL (ELL, ELL2 or ELL3). Interacts with AFF4. Actively expressed in embryonic stem cells (ES cells), while it is weakly expressed in differentiated cells.

It localises to the nucleus. In terms of biological role, enhancer-binding elongation factor that specifically binds enhancers in embryonic stem cells (ES cells), marks them, and is required for their future activation during stem cell specification. Elongation factor component of the super elongation complex (SEC), a complex required to increase the catalytic rate of RNA polymerase II transcription by suppressing transient pausing by the polymerase at multiple sites along the DNA. Component of the little elongation complex (LEC), a complex required to regulate small nuclear RNA (snRNA) gene transcription by RNA polymerase II and III. Does not only bind to enhancer regions of active genes, but also marks the enhancers that are in a poised or inactive state in ES cells and is required for establishing proper RNA polymerase II occupancy at developmentally regulated genes in a cohesin-dependent manner. Probably required for priming developmentally regulated genes for later recruitment of the super elongation complex (SEC), for transcriptional activation during differentiation. Required for recruitment of P-TEFb within SEC during differentiation. Probably preloaded on germ cell chromatin, suggesting that it may prime gene activation by marking enhancers as early as in the germ cells. Promoting epithelial-mesenchymal transition (EMT). The protein is RNA polymerase II elongation factor ELL3 (Ell3) of Mus musculus (Mouse).